A 187-amino-acid chain; its full sequence is Elongation factor P (187 aa).

This sequence belongs to the elongation factor P family.

The protein resides in the cytoplasm. It functions in the pathway protein biosynthesis; polypeptide chain elongation. Involved in peptide bond synthesis. Stimulates efficient translation and peptide-bond synthesis on native or reconstituted 70S ribosomes in vitro. Probably functions indirectly by altering the affinity of the ribosome for aminoacyl-tRNA, thus increasing their reactivity as acceptors for peptidyl transferase. This is Elongation factor P (efp) from Treponema pallidum (strain Nichols).